Here is a 375-residue protein sequence, read N- to C-terminus: DnaJ homolog subfamily B member 12 (375 aa).

Residue Met-1 is modified to N-acetylmethionine. Residues 1-243 (MESNKDEAER…DRRDNQGDGG (243 aa)) lie on the Cytoplasmic side of the membrane. Residues 45–92 (ALIESLNQKPQTAGDQPPPTDTTHATHRKAGGTDAPSANGEAGGESTK) are disordered. A compositionally biased stretch (polar residues) spans 49–58 (SLNQKPQTAG). The J domain maps to 112–176 (YEILGVSRGA…RKQYDQFGDD (65 aa)). At His-185 the chain carries Pros-methylhistidine. Residues 244 to 264 (LGVFVQLMPILILILVSALSQ) form a helical membrane-spanning segment. The Lumenal portion of the chain corresponds to 265–375 (LMVSSPPYSL…LSEVQASLHG (111 aa)).

Belongs to the DnaJ family. DNAJB12/DNAJB14 subfamily. Homodimer and homotetramer. Interacts (via J domain) with HSPA8/Hsc70. Forms a multiprotein complex, at least composed of DNAJB12, DNAJB14, HSPA8/Hsc70 and SGTA; interaction with DNAJB14 and HSPA8/Hsc70 is direct. In terms of processing, methylated at His-185 by METTL9.

The protein localises to the endoplasmic reticulum membrane. It localises to the nucleus membrane. Its function is as follows. Acts as a co-chaperone with HSPA8/Hsc70; required to promote protein folding and trafficking, prevent aggregation of client proteins, and promote unfolded proteins to endoplasmic reticulum-associated degradation (ERAD) pathway. Acts by determining HSPA8/Hsc70's ATPase and polypeptide-binding activities. Can also act independently of HSPA8/Hsc70: together with DNAJB14, acts as a chaperone that promotes maturation of potassium channels KCND2 and KCNH2 by stabilizing nascent channel subunits and assembling them into tetramers. While stabilization of nascent channel proteins is dependent on HSPA8/Hsc70, the process of oligomerization of channel subunits is independent of HSPA8/Hsc70. When overexpressed, forms membranous structures together with DNAJB14 and HSPA8/Hsc70 within the nucleus; the role of these structures, named DJANGOs, is still unclear. In terms of biological role, (Microbial infection) In case of infection by polyomavirus, involved in the virus endoplasmic reticulum membrane penetration and infection. This Homo sapiens (Human) protein is DnaJ homolog subfamily B member 12.